Reading from the N-terminus, the 63-residue chain is Megourin-1 (63 aa).

In terms of assembly, monomer. Contains four disulfide bonds.

The protein localises to the secreted. Has antimicrobial activity against Gram-positive bacteria and fungi. This is Megourin-1 from Megoura viciae (Vetch aphid).